The primary structure comprises 282 residues: Probable iron transport system membrane protein HI_0360 (282 aa).

Helical transmembrane passes span 17-37 (AMILSTAVGGICAFLSSYLML), 63-83 (LPYALGAFFAGILAALSILWI), 93-113 (AVIGFIFSTFFALGLLIVSLN), 140-160 (IIIGVCLVLLLLFWKDLLLIF), 164-184 (TQAITVGLSPLFYKILFFTLL), 186-206 (ACVVAALQTVGAILVIAMVVT), 223-243 (IIAIILGAVTSFVGVYISYYL), and 245-265 (GATGGVIVTLQTLLFLVAFLF).

It belongs to the ABC-3 integral membrane protein family.

Its subcellular location is the cell inner membrane. Functionally, part of an ATP-driven transport system HI_0359/HI_0360/HI_0361/HI_0362 for iron. The chain is Probable iron transport system membrane protein HI_0360 from Haemophilus influenzae (strain ATCC 51907 / DSM 11121 / KW20 / Rd).